The primary structure comprises 250 residues: 3-deoxy-manno-octulosonate cytidylyltransferase (250 aa).

This sequence belongs to the KdsB family.

The protein resides in the cytoplasm. It catalyses the reaction 3-deoxy-alpha-D-manno-oct-2-ulosonate + CTP = CMP-3-deoxy-beta-D-manno-octulosonate + diphosphate. Its pathway is nucleotide-sugar biosynthesis; CMP-3-deoxy-D-manno-octulosonate biosynthesis; CMP-3-deoxy-D-manno-octulosonate from 3-deoxy-D-manno-octulosonate and CTP: step 1/1. The protein operates within bacterial outer membrane biogenesis; lipopolysaccharide biosynthesis. In terms of biological role, activates KDO (a required 8-carbon sugar) for incorporation into bacterial lipopolysaccharide in Gram-negative bacteria. The polypeptide is 3-deoxy-manno-octulosonate cytidylyltransferase (Legionella pneumophila (strain Lens)).